The chain runs to 163 residues: Interleukin-17F (163 aa).

Residues 1–30 form the signal peptide; the sequence is MTVKSLHVTAMVKYLLLLILGLAFLRETAA. A glycan (N-linked (GlcNAc...) asparagine) is linked at N83. 2 disulfide bridges follow: C102/C152 and C107/C154.

It belongs to the IL-17 family. As to quaternary structure, homodimer; disulfide-linked. Heterodimer with IL17A (IL17A-IL17F). Forms complexes with IL17RA and IL17RC receptors with 2:1 binding stoichiometry: two receptor chains for one interleukin molecule. IL17F homodimer forms predominantly complexes with IL17RC homodimer, whereas IL17A-IL17F favors complexes with IL17RA-IL17RC. IL17RA and IL17RC chains cannot distinguish between IL17A and IL17F molecules, potentially enabling the formation of topologically distinct complexes.

The protein resides in the secreted. Its function is as follows. Effector cytokine of innate and adaptive immune system involved in antimicrobial host defense and maintenance of tissue integrity. IL17A-IL17F signals via IL17RA-IL17RC heterodimeric receptor complex, triggering homotypic interaction of IL17RA and IL17RC chains with TRAF3IP2 adapter through SEFIR domains. This leads to downstream TRAF6-mediated activation of NF-kappa-B and MAPkinase pathways ultimately resulting in transcriptional activation of cytokines, chemokines, antimicrobial peptides and matrix metalloproteinases, with potential strong immune inflammation. IL17A-IL17F is primarily involved in host defense against extracellular bacteria and fungi by inducing neutrophilic inflammation. As signature effector cytokine of T-helper 17 cells (Th17), primarily induces neutrophil activation and recruitment at infection and inflammatory sites. Stimulates the production of antimicrobial beta-defensins DEFB1, DEFB103A, and DEFB104A by mucosal epithelial cells, limiting the entry of microbes through the epithelial barriers. IL17F homodimer can signal via IL17RC homodimeric receptor complex, triggering downstream activation of TRAF6 and NF-kappa-B signaling pathway. Via IL17RC induces transcriptional activation of IL33, a potent cytokine that stimulates group 2 innate lymphoid cells and adaptive T-helper 2 cells involved in pulmonary allergic response to fungi. Likely via IL17RC, promotes sympathetic innervation of peripheral organs by coordinating the communication between gamma-delta T cells and parenchymal cells. Stimulates sympathetic innervation of thermogenic adipose tissue by driving TGFB1 expression. Regulates the composition of intestinal microbiota and immune tolerance by inducing antimicrobial proteins that specifically control the growth of commensal Firmicutes and Bacteroidetes. The polypeptide is Interleukin-17F (IL17F) (Callithrix jacchus (White-tufted-ear marmoset)).